The primary structure comprises 173 residues: 6,7-dimethyl-8-ribityllumazine synthase (173 aa).

5-amino-6-(D-ribitylamino)uracil-binding positions include F24, 58–60 (ALE), and 82–84 (AVI). 87 to 88 (ET) contributes to the (2S)-2-hydroxy-3-oxobutyl phosphate binding site. H90 functions as the Proton donor in the catalytic mechanism. N115 lines the 5-amino-6-(D-ribitylamino)uracil pocket. R129 is a binding site for (2S)-2-hydroxy-3-oxobutyl phosphate. The disordered stretch occupies residues 150 to 173 (ALEPEEDDEDDEDEDFDDEEDDGR). Residues 152–173 (EPEEDDEDDEDEDFDDEEDDGR) show a composition bias toward acidic residues.

It belongs to the DMRL synthase family.

The enzyme catalyses (2S)-2-hydroxy-3-oxobutyl phosphate + 5-amino-6-(D-ribitylamino)uracil = 6,7-dimethyl-8-(1-D-ribityl)lumazine + phosphate + 2 H2O + H(+). Its pathway is cofactor biosynthesis; riboflavin biosynthesis; riboflavin from 2-hydroxy-3-oxobutyl phosphate and 5-amino-6-(D-ribitylamino)uracil: step 1/2. Its function is as follows. Catalyzes the formation of 6,7-dimethyl-8-ribityllumazine by condensation of 5-amino-6-(D-ribitylamino)uracil with 3,4-dihydroxy-2-butanone 4-phosphate. This is the penultimate step in the biosynthesis of riboflavin. The polypeptide is 6,7-dimethyl-8-ribityllumazine synthase (Bordetella pertussis (strain Tohama I / ATCC BAA-589 / NCTC 13251)).